Reading from the N-terminus, the 51-residue chain is PDTTYLGPLNCKSCWQKFDSLVRCHDHYLCRHCLNLLLTSSDRCPLCKYPL.

Residues 11–47 form an RING-type; atypical zinc finger; that stretch reads CKSCWQKFDSLVRCHDHYLCRHCLNLLLTSSDRCPLC.

It belongs to the arenaviridae Z protein family. Interacts with protein NP; this interaction probably directs the encapsidated genome to budding sites. Interacts (via RING-type zinc finger) with polymerase L; this interaction inhibits viral transcription and replication, Z partially blocks the product exit tunnel for the releasing nascent RNA product. Interacts with the glycoprotein complex; this interaction plays a role in virion budding. Interacts (via RING-type zinc finger) with host EIF4E; this interaction results in conformational changes of both interacting proteins and reduces EIF4E affinity for its substrate, the 5'-m7 G cap structure. Interacts (via late-budding domain) with host TSG101; this interaction is essential for budding and release of viral particles. Interacts with host RPLP0; this interaction may serve to load ribosome-like particles inside the virion. Interacts with host PML; this interaction induces PML bodies redistribution in the cytoplasm upon viral infection.

The protein localises to the virion. It localises to the host cytoplasm. The protein resides in the host perinuclear region. It is found in the host cell membrane. Functionally, plays a crucial role in virion assembly and budding. Expressed late in the virus life cycle, it acts as an inhibitor of viral transcription and RNA synthesis by interacting with the viral polymerase L. Presumably recruits the NP encapsidated genome to cellular membranes at budding sites via direct interaction with NP. Plays critical roles in the final steps of viral release by interacting with host TSG101, a member of the vacuolar protein-sorting pathway and using other cellular host proteins involved in vesicle formation pathway. The budding of the virus progeny occurs after association of protein Z with the viral glycoprotein complex SSP-GP1-GP2 at the cell periphery, step that requires myristoylation of protein Z. Also selectively represses protein production by associating with host EIF4E. In cell-based minigenome assay, has an inhibitory effect on the ribonucleoprotein machinery (vRNP), which is responsible for the replication and transcription of the viral genome. This Homo sapiens (Human) protein is RING finger protein Z (Z).